The primary structure comprises 633 residues: MGKIIGIDLGTTNSCVAVMQGTQPTVIENSEGSRTTPSMVAFTKTGERLVGQAAKRQAVTNPKNTIFSIKRFMGRKYDEVPNEKKLASYDVVNEGGYAKVKIGDKTYSPQEISAMILQKMKQTAEDFLGEKVTEAVITVPAYFNDAQRQATKDAGKIAGLEVKRIINEPTAAALAYGLDKKKENEKVAVFDLGGGTFDISILELGGGVFEVKSTDGDTHLGGDDFDQVIINYLADEFKKQEGIDLRKDAIALQRLKEAAEKAKIELSSRTDTEINLPFITATQEGPKHLVINLTRAKFEAMSAALFDKLFEPCRRAIKNSKFDIKEIDEVVLVGGSTRIPKVQALVKEFFGKEPNKSVNPDEVVAIGAAIQGGVLQGDVTDVLLLDVTPLSLGIETLGGVMTKLIEANTTIPTRKQEIFSTAADNQTSVEVHVLQGERPMASDNKTLGRFHLSDIPPAPRGVPQIEVTFDIDANGILNVSAKDKATGKEQSIKIEASGKLTEAEIEKMKEDAKAHAAEDQKRKEEIELKNSADSLIFSTEKQLTELGDKLPADKKAAIESALEKLKEAHKSGRVDAIKPAMDELSKVWSDAASNLYGQPGAEPQPETNGHAGGSKGGDGAVNAEYEVIDGDDK.

Residue threonine 196 is modified to Phosphothreonine; by autocatalysis. The segment at 594–633 is disordered; that stretch reads NLYGQPGAEPQPETNGHAGGSKGGDGAVNAEYEVIDGDDK. Gly residues predominate over residues 610–619; it reads HAGGSKGGDG.

This sequence belongs to the heat shock protein 70 family.

Functionally, acts as a chaperone. This chain is Chaperone protein DnaK, found in Chlorobaculum tepidum (strain ATCC 49652 / DSM 12025 / NBRC 103806 / TLS) (Chlorobium tepidum).